We begin with the raw amino-acid sequence, 190 residues long: Bifunctional protein PyrR (190 aa).

Residues 107 to 119 (IILVDDVLYSGRT) carry the PRPP-binding motif.

This sequence belongs to the purine/pyrimidine phosphoribosyltransferase family. PyrR subfamily.

It catalyses the reaction UMP + diphosphate = 5-phospho-alpha-D-ribose 1-diphosphate + uracil. Its function is as follows. Regulates the transcription of the pyrimidine nucleotide (pyr) operon in response to exogenous pyrimidines. Functionally, also displays a weak uracil phosphoribosyltransferase activity which is not physiologically significant. The protein is Bifunctional protein PyrR of Corynebacterium diphtheriae (strain ATCC 700971 / NCTC 13129 / Biotype gravis).